The primary structure comprises 147 residues: D-aminoacyl-tRNA deacylase (147 aa).

Positions 136–137 (GP) match the Gly-cisPro motif, important for rejection of L-amino acids motif.

Belongs to the DTD family. In terms of assembly, homodimer.

It localises to the cytoplasm. It catalyses the reaction glycyl-tRNA(Ala) + H2O = tRNA(Ala) + glycine + H(+). It carries out the reaction a D-aminoacyl-tRNA + H2O = a tRNA + a D-alpha-amino acid + H(+). An aminoacyl-tRNA editing enzyme that deacylates mischarged D-aminoacyl-tRNAs. Also deacylates mischarged glycyl-tRNA(Ala), protecting cells against glycine mischarging by AlaRS. Acts via tRNA-based rather than protein-based catalysis; rejects L-amino acids rather than detecting D-amino acids in the active site. By recycling D-aminoacyl-tRNA to D-amino acids and free tRNA molecules, this enzyme counteracts the toxicity associated with the formation of D-aminoacyl-tRNA entities in vivo and helps enforce protein L-homochirality. The chain is D-aminoacyl-tRNA deacylase from Streptococcus pneumoniae serotype 4 (strain ATCC BAA-334 / TIGR4).